Consider the following 330-residue polypeptide: Phenylalanine--tRNA ligase alpha subunit (330 aa).

A Mg(2+)-binding site is contributed by E246.

Belongs to the class-II aminoacyl-tRNA synthetase family. Phe-tRNA synthetase alpha subunit type 1 subfamily. Tetramer of two alpha and two beta subunits. The cofactor is Mg(2+).

It localises to the cytoplasm. The enzyme catalyses tRNA(Phe) + L-phenylalanine + ATP = L-phenylalanyl-tRNA(Phe) + AMP + diphosphate + H(+). In Sulfurimonas denitrificans (strain ATCC 33889 / DSM 1251) (Thiomicrospira denitrificans (strain ATCC 33889 / DSM 1251)), this protein is Phenylalanine--tRNA ligase alpha subunit.